A 177-amino-acid polypeptide reads, in one-letter code: MDFKQYSPEELKECSMIEVVHSVLGDKKQATTFNELVQEIAQVLGLSQEQVNAKIAQFYTDLNIDGRFINLGENRWGLRSWYPYEQIDEEILPQPKPKKKRKVEEDGFDDYIEEDEDDFDDVDGNEDEDDDVEDLDKVLEDEDGDDDDLDDLDDDEDDFAEEELEYDETEEEEEEEL.

The HTH HARE-type domain occupies 14–81; sequence CSMIEVVHSV…GENRWGLRSW (68 aa). The disordered stretch occupies residues 93 to 177; the sequence is PQPKPKKKRK…ETEEEEEEEL (85 aa). Residues 106–177 are compositionally biased toward acidic residues; it reads DGFDDYIEED…ETEEEEEEEL (72 aa).

The protein belongs to the RpoE family. RNAP is composed of a core of 2 alpha, a beta and a beta' subunits. The core is associated with a delta subunit and one of several sigma factors.

Its function is as follows. Participates in both the initiation and recycling phases of transcription. In the presence of the delta subunit, RNAP displays an increased specificity of transcription, a decreased affinity for nucleic acids, and an increased efficiency of RNA synthesis because of enhanced recycling. The chain is Probable DNA-directed RNA polymerase subunit delta from Bacillus cereus (strain AH187).